Here is a 291-residue protein sequence, read N- to C-terminus: 4-hydroxy-tetrahydrodipicolinate synthase (291 aa).

A pyruvate-binding site is contributed by Thr44. Tyr132 functions as the Proton donor/acceptor in the catalytic mechanism. Catalysis depends on Lys160, which acts as the Schiff-base intermediate with substrate. Ile202 is a binding site for pyruvate.

Belongs to the DapA family. Homotetramer; dimer of dimers.

It is found in the cytoplasm. The catalysed reaction is L-aspartate 4-semialdehyde + pyruvate = (2S,4S)-4-hydroxy-2,3,4,5-tetrahydrodipicolinate + H2O + H(+). It functions in the pathway amino-acid biosynthesis; L-lysine biosynthesis via DAP pathway; (S)-tetrahydrodipicolinate from L-aspartate: step 3/4. Its function is as follows. Catalyzes the condensation of (S)-aspartate-beta-semialdehyde [(S)-ASA] and pyruvate to 4-hydroxy-tetrahydrodipicolinate (HTPA). The protein is 4-hydroxy-tetrahydrodipicolinate synthase of Parvibaculum lavamentivorans (strain DS-1 / DSM 13023 / NCIMB 13966).